The following is a 226-amino-acid chain: Ribonuclease 3 (226 aa).

Positions 6 to 128 (INKLQRKLGY…LIGGVFLDSD (123 aa)) constitute an RNase III domain. Glutamate 41 provides a ligand contact to Mg(2+). The active site involves aspartate 45. Mg(2+) is bound by residues aspartate 114 and glutamate 117. Glutamate 117 is a catalytic residue. The DRBM domain maps to 155–225 (DPKTRLQEYL…AEQALIKLGL (71 aa)).

The protein belongs to the ribonuclease III family. In terms of assembly, homodimer. The cofactor is Mg(2+).

It localises to the cytoplasm. The enzyme catalyses Endonucleolytic cleavage to 5'-phosphomonoester.. Functionally, digests double-stranded RNA. Involved in the processing of primary rRNA transcript to yield the immediate precursors to the large and small rRNAs (23S and 16S). Processes some mRNAs, and tRNAs when they are encoded in the rRNA operon. Processes pre-crRNA and tracrRNA of type II CRISPR loci if present in the organism. This Pantoea ananatis (strain LMG 20103) protein is Ribonuclease 3 (rnc).